The chain runs to 284 residues: Tryptophan synthase alpha chain (284 aa).

Active-site proton acceptor residues include E59 and D70.

This sequence belongs to the TrpA family. In terms of assembly, tetramer of two alpha and two beta chains.

It catalyses the reaction (1S,2R)-1-C-(indol-3-yl)glycerol 3-phosphate + L-serine = D-glyceraldehyde 3-phosphate + L-tryptophan + H2O. It participates in amino-acid biosynthesis; L-tryptophan biosynthesis; L-tryptophan from chorismate: step 5/5. Functionally, the alpha subunit is responsible for the aldol cleavage of indoleglycerol phosphate to indole and glyceraldehyde 3-phosphate. This Azospirillum brasilense protein is Tryptophan synthase alpha chain.